Reading from the N-terminus, the 32-residue chain is Calichemicin antitumor antibiotic biosynthesis protein (32 aa).

This Micromonospora echinospora (Micromonospora purpurea) protein is Calichemicin antitumor antibiotic biosynthesis protein.